A 325-amino-acid chain; its full sequence is Lipoyl synthase (325 aa).

Residues C71, C76, C82, C97, C101, C104, and S311 each contribute to the [4Fe-4S] cluster site. Positions 83-300 (FSGGTATFMI…ERQALAMGFT (218 aa)) constitute a Radical SAM core domain.

It belongs to the radical SAM superfamily. Lipoyl synthase family. [4Fe-4S] cluster serves as cofactor.

It is found in the cytoplasm. It carries out the reaction [[Fe-S] cluster scaffold protein carrying a second [4Fe-4S](2+) cluster] + N(6)-octanoyl-L-lysyl-[protein] + 2 oxidized [2Fe-2S]-[ferredoxin] + 2 S-adenosyl-L-methionine + 4 H(+) = [[Fe-S] cluster scaffold protein] + N(6)-[(R)-dihydrolipoyl]-L-lysyl-[protein] + 4 Fe(3+) + 2 hydrogen sulfide + 2 5'-deoxyadenosine + 2 L-methionine + 2 reduced [2Fe-2S]-[ferredoxin]. Its pathway is protein modification; protein lipoylation via endogenous pathway; protein N(6)-(lipoyl)lysine from octanoyl-[acyl-carrier-protein]: step 2/2. Functionally, catalyzes the radical-mediated insertion of two sulfur atoms into the C-6 and C-8 positions of the octanoyl moiety bound to the lipoyl domains of lipoate-dependent enzymes, thereby converting the octanoylated domains into lipoylated derivatives. This chain is Lipoyl synthase, found in Methylobacillus flagellatus (strain ATCC 51484 / DSM 6875 / VKM B-1610 / KT).